Here is a 525-residue protein sequence, read N- to C-terminus: Glutamate--cysteine ligase (525 aa).

The protein belongs to the glutamate--cysteine ligase type 1 family. Type 1 subfamily.

The catalysed reaction is L-cysteine + L-glutamate + ATP = gamma-L-glutamyl-L-cysteine + ADP + phosphate + H(+). It participates in sulfur metabolism; glutathione biosynthesis; glutathione from L-cysteine and L-glutamate: step 1/2. This is Glutamate--cysteine ligase from Vibrio vulnificus (strain CMCP6).